We begin with the raw amino-acid sequence, 508 residues long: Pyruvate kinase (508 aa).

R56 provides a ligand contact to substrate. The K(+) site is built by N58, S60, D90, and T91. Residue 58-61 (NFSH) coordinates ATP. 2 residues coordinate ATP: R97 and K185. Residue E251 coordinates Mg(2+). Positions 274, 275, and 307 each coordinate substrate. Residue D275 coordinates Mg(2+).

It belongs to the pyruvate kinase family. In terms of assembly, homotetramer. Mg(2+) is required as a cofactor. The cofactor is K(+).

The enzyme catalyses pyruvate + ATP = phosphoenolpyruvate + ADP + H(+). The protein operates within carbohydrate degradation; glycolysis; pyruvate from D-glyceraldehyde 3-phosphate: step 5/5. Regulated by phosphoenolpyruvate substrate and is allosterically activated by ribose-5-phosphate, AMP and other nucleoside monophosphates but not by fructose-1,6-bisphosphate. This is Pyruvate kinase (pyk) from Mycoplasma pneumoniae (strain ATCC 29342 / M129 / Subtype 1) (Mycoplasmoides pneumoniae).